The sequence spans 135 residues: Large ribosomal subunit protein mL41A (135 aa).

The transit peptide at 1 to 13 directs the protein to the mitochondrion; the sequence is MGLISKIARGLVR.

It belongs to the mitochondrion-specific ribosomal protein mL41 family. Component of the mitochondrial ribosome large subunit (39S) which comprises a 16S rRNA and about 50 distinct proteins.

It is found in the mitochondrion. Functionally, component of the mitochondrial ribosome large subunit. Also involved in apoptosis and cell cycle. The polypeptide is Large ribosomal subunit protein mL41A (mrpl41-a) (Xenopus laevis (African clawed frog)).